We begin with the raw amino-acid sequence, 455 residues long: MNFDTIIIGGGMAGLSCALRCLEAGLKTAVIASGQSALHFSSGSIDVLAKTPSGEPVSNPMTCIDTFAKEYPNHPYATLGKETVERAIDWYRNTLSTIGVPLTSQNNGLNHYRLTPLGAMKSTWLSQPFVHQFPMDLEKNKTQKMVLITIDGFRDFQPKLAQDNLKQITQLSDLEITTANISLSAFNDIQRNHCELRSIDLSRLLSKRANRQELAYALQQHAQPGDLVVIPSIFGNGTGLTYLKEIEQLTKLTLCEVPTMPPSLLGIRLEESMKHAFIELGGTMLNGDHVVQGEFSYVDKSDPEHSHYRLNRIFTKNHGDFPLQAKQFVLATGSFFSQGLKANVDSMIEPIFGLDIAQSDKRTDWYSHDFFSTQSHPFLSMGIKTTANFQAIKSGHVIDNLYCAGAILSGYNPILEGSGSGVAISSGFHAAESIIEQLQPNDFFQNNNIKAEVAL.

Belongs to the anaerobic G-3-P dehydrogenase subunit B family. In terms of assembly, composed of a catalytic GlpA/B dimer and of membrane bound GlpC. FMN serves as cofactor.

The enzyme catalyses a quinone + sn-glycerol 3-phosphate = dihydroxyacetone phosphate + a quinol. It functions in the pathway polyol metabolism; glycerol degradation via glycerol kinase pathway; glycerone phosphate from sn-glycerol 3-phosphate (anaerobic route): step 1/1. Conversion of glycerol 3-phosphate to dihydroxyacetone. Uses fumarate or nitrate as electron acceptor. This chain is Anaerobic glycerol-3-phosphate dehydrogenase subunit B, found in Aliivibrio fischeri (strain MJ11) (Vibrio fischeri).